The sequence spans 452 residues: Probable pectate lyase 9 (452 aa).

A signal peptide spans 1-25 (MATSSLKLTSACFVLLFIFVGCVLT). Asn88, Asn139, Asn214, and Asn233 each carry an N-linked (GlcNAc...) asparagine glycan. Asp250 is a binding site for Ca(2+). A glycan (N-linked (GlcNAc...) asparagine) is linked at Asn271. Residues Asp274 and Asp278 each coordinate Ca(2+). Residues Asn281 and Asn305 are each glycosylated (N-linked (GlcNAc...) asparagine). Arg330 is a catalytic residue. An N-linked (GlcNAc...) asparagine glycan is attached at Asn374.

It belongs to the polysaccharide lyase 1 family. It depends on Ca(2+) as a cofactor.

It carries out the reaction Eliminative cleavage of (1-&gt;4)-alpha-D-galacturonan to give oligosaccharides with 4-deoxy-alpha-D-galact-4-enuronosyl groups at their non-reducing ends.. Its pathway is glycan metabolism; pectin degradation; 2-dehydro-3-deoxy-D-gluconate from pectin: step 2/5. The sequence is that of Probable pectate lyase 9 from Arabidopsis thaliana (Mouse-ear cress).